The sequence spans 235 residues: Superoxide dismutase [Mn] 3.1, mitochondrial (235 aa).

The transit peptide at 1–31 (MALRTLASKKVLSFPFGGAGRPLAAAASARG) directs the protein to the mitochondrion. 4 residues coordinate Mn(2+): His-59, His-107, Asp-196, and His-200.

It belongs to the iron/manganese superoxide dismutase family. Homotetramer. The cofactor is Mn(2+).

It is found in the mitochondrion matrix. It carries out the reaction 2 superoxide + 2 H(+) = H2O2 + O2. Functionally, destroys superoxide anion radicals which are normally produced within the cells and which are toxic to biological systems. This Zea mays (Maize) protein is Superoxide dismutase [Mn] 3.1, mitochondrial (SODA.4).